Consider the following 247-residue polypeptide: E3 ubiquitin-protein ligase RNF182 (247 aa).

The RING-type zinc-finger motif lies at 20–68 (CKICYNRYNLKQRKPKVLECCHRVCAKCLYKIIDFGDSPQGVIVCPFCR). 2 consecutive transmembrane segments (helical) span residues 184 to 204 (VLVW…IYLL) and 211 to 231 (LGVV…VYGF).

In terms of assembly, interacts with ATP6V0C. As to expression, up-regulated in neuronal cells subjected to cell death-inducing injuries, such as oxygen and glucose deprivation (at protein level). Could be up-regulated in Alzheimer disease brains. Highly expressed in innate immune organs such as lymph nodes and spleen and in immune cells such as macrophages and dendritic cells.

The protein resides in the membrane. The protein localises to the cytoplasm. It carries out the reaction S-ubiquitinyl-[E2 ubiquitin-conjugating enzyme]-L-cysteine + [acceptor protein]-L-lysine = [E2 ubiquitin-conjugating enzyme]-L-cysteine + N(6)-ubiquitinyl-[acceptor protein]-L-lysine.. Its pathway is protein modification; protein ubiquitination. Its function is as follows. E3 ubiquitin-protein ligase that mediates the ubiquitination of ATP6V0C and targets it to degradation via the ubiquitin-proteasome pathway. Also plays a role in the inhibition of TLR-triggered innate immune response by mediating 'Lys'-48-linked ubiquitination and subsequent degradation of NF-kappa-B component RELA. The protein is E3 ubiquitin-protein ligase RNF182 (RNF182) of Homo sapiens (Human).